The following is a 103-amino-acid chain: Nematocin (103 aa).

A signal peptide spans 1–19; that stretch reads MGSSPILLVLAISIGLASA. Cysteine 20 and cysteine 25 are joined by a disulfide. Tyrosine 30 is subject to Tyrosine amide. A propeptide spanning residues 31 to 103 is cleaved from the precursor; the sequence is GRTIRCSSCG…QGGCQTSAMC (73 aa).

Belongs to the vasopressin/oxytocin family. Detected in thermosensory AFD neurons, neurosecretory NSM cells, AVK interneurons, pharyngeal neuron M5, and the mechanosensory DVA neuron. Detected in male-specific CP motor neurons.

Its subcellular location is the secreted. In terms of biological role, ligand for the G-protein coupled receptor ntr-1. Plays a role in gustatory associative learning. Also plays a role in male mating behavior. The protein is Nematocin of Caenorhabditis elegans.